A 416-amino-acid chain; its full sequence is Probable carboxypeptidase An18g06210 (416 aa).

A signal peptide spans 1-16 (MKSPISLLAAVGVASA). N-linked (GlcNAc...) asparagine glycans are attached at residues Asn54, Asn70, and Asn129. Asp142 serves as a coordination point for Zn(2+). The active-site Proton acceptor is the Glu174. Glu175 serves as a coordination point for Zn(2+). N-linked (GlcNAc...) asparagine glycosylation is found at Asn187 and Asn319.

This sequence belongs to the peptidase M20A family. The cofactor is Zn(2+).

The protein resides in the secreted. This Aspergillus niger (strain ATCC MYA-4892 / CBS 513.88 / FGSC A1513) protein is Probable carboxypeptidase An18g06210.